The primary structure comprises 485 residues: Two-component response regulator ORR31 (485 aa).

A Response regulatory domain is found at 13 to 138; the sequence is RVMPVDGDTK…TMAQLWRVVA (126 aa). Asp66 carries the 4-aspartylphosphate modification. Polar residues predominate over residues 195–204; it reads LTINVDSGSS. The disordered stretch occupies residues 195–236; sequence LTINVDSGSSDGADANPRQKLEHKKDAKGPLGQHVASHLQPQ. The segment covering 211 to 222 has biased composition (basic and acidic residues); the sequence is PRQKLEHKKDAK.

It belongs to the ARR family. Type-B subfamily. Two-component system major event consists of a His-to-Asp phosphorelay between a sensor histidine kinase (HK) and a response regulator (RR). In plants, the His-to-Asp phosphorelay involves an additional intermediate named Histidine-containing phosphotransfer protein (HPt). This multistep phosphorelay consists of a His-Asp-His-Asp sequential transfer of a phosphate group between first a His and an Asp of the HK protein, followed by the transfer to a conserved His of the HPt protein and finally the transfer to an Asp in the receiver domain of the RR protein.

Functionally, functions as a response regulator involved in His-to-Asp phosphorelay signal transduction system. Phosphorylation of the Asp residue in the receiver domain activates the ability of the protein to promote the transcription of target genes. May directly activate some type-A response regulators in response to cytokinins. This Oryza sativa subsp. japonica (Rice) protein is Two-component response regulator ORR31.